Here is a 62-residue protein sequence, read N- to C-terminus: MTTSNTKVKLQLVRSLIGTRESHRATVRGLGLGRINSVSELEDTPAVRGMINKVSYLVKVIG.

It belongs to the universal ribosomal protein uL30 family. In terms of assembly, part of the 50S ribosomal subunit.

This is Large ribosomal subunit protein uL30 from Polynucleobacter asymbioticus (strain DSM 18221 / CIP 109841 / QLW-P1DMWA-1) (Polynucleobacter necessarius subsp. asymbioticus).